Consider the following 1140-residue polypeptide: Calcium-activated potassium channel slo-1 (1140 aa).

The Extracellular portion of the chain corresponds to 1–44; the sequence is MGEIYSPSQSKGFNQPYGYPMNCNLSRVFMEMTEEDRKCLEERK. The chain crosses the membrane as a helical span at residues 45–65; it reads YWCFLLSSITTFCASMILVVI. Topologically, residues 66–139 are cytoplasmic; it reads WRVVTHLCCQ…LISGQSLTGR (74 aa). The chain crosses the membrane as a helical span at residues 140–161; it reads FLVLLVFILSIGSLIIYFYDAS. Over 162–178 the chain is Extracellular; that stretch reads FQNFQVETCIPWQDSPS. A helical transmembrane segment spans residues 179–199; that stretch reads QQIDLGFNIFFLVYFFIRFIA. Residues 200 to 203 lie on the Cytoplasmic side of the membrane; that stretch reads ASDK. The chain crosses the membrane as a helical span at residues 204–224; that stretch reads VWFLLEMYSWIDFFTIPPSFV. Topologically, residues 225–228 are extracellular; that stretch reads AIYL. A helical; Voltage-sensor transmembrane segment spans residues 229-249; the sequence is QRNWLGFRFLRALRLMTVPDI. Topologically, residues 250-264 are cytoplasmic; that stretch reads LQYLNILKTSSSIRL. A helical membrane pass occupies residues 265 to 285; sequence TQLVTIFVAVCLTGAGLVHLL. Residues 286 to 299 are Extracellular-facing; the sequence is ENSGDFFKGFINPH. The segment at residues 300–322 is an intramembrane region (pore-forming); the sequence is RITYADSVYFVLVTMSTVGYGDI. The Selectivity for potassium signature appears at 316 to 319; the sequence is TVGY. Residues 323-331 are Extracellular-facing; it reads YCTTLCGRL. The chain crosses the membrane as a helical span at residues 332 to 352; it reads FMIFFILFGLAMFASYVPEIA. Residues 353–1140 lie on the Cytoplasmic side of the membrane; the sequence is DLIGNRQKYG…LEYEPGKRHF (788 aa). The RCK N-terminal 1 domain maps to 371-514; sequence KKHIVVCGHI…DWKRGDDVIC (144 aa). Residues 520–540 form a segment S7 region; sequence LGFIAQSCLAPGFSTMMANLF. Residues 578 to 598 are segment S8; the sequence is MTFPEAVDLLFNRLGLLLLAI. The tract at residues 797–817 is segment S9; the sequence is VLNGHVVVCLFADQDSPLIGL. The RCK N-terminal 2 domain occupies 799–953; that stretch reads NGHVVVCLFA…GAKFGTNVPM (155 aa). Positions 955 to 977 match the Calcium bowl motif; the sequence is TELVNDSNVQFLDQDDDDDPDTE. Ca(2+)-binding residues include Q964, D967, D970, and D972. Residues 984–1004 are segment S10; it reads FACGTAFAISVLDSLMSTTYF.

Belongs to the potassium channel family. Calcium-activated (TC 1.A.1.3) subfamily. Slo sub-subfamily. In terms of assembly, homotetramer; which constitutes the calcium-activated potassium channel. In terms of processing, phosphorylated. Expressed in synaptic regions of the nervous system including in both the nerve ring and nerve cords, as well as in the body-wall and vulval muscle. Expressed broadly in motor neurons. Forms puncta at presynaptic terminals of neurons, muscle excitation sites, and in the dorsal nerve cord.

It localises to the cell membrane. The protein localises to the synapse. Potassium channel activated by both membrane depolarization or increase in cytosolic Ca(2+) that mediates export of K(+). Its activation dampens the excitatory events that elevate the cytosolic Ca(2+) concentration and/or depolarize the cell membrane. It therefore contributes to repolarization of the membrane potential. Essential for the regulation of neurotransmitter release at synapses. Regulates longevity and age-associated decline in motor activity in mid-late life, by acting in motor neurons and through daf-16 in the intestine. When clustered in neurons, mediates ethanol-induced suppression of locomotory and egg-laying behaviors. This Caenorhabditis elegans protein is Calcium-activated potassium channel slo-1.